The chain runs to 214 residues: Probable nicotinate-nucleotide adenylyltransferase (214 aa).

It belongs to the NadD family.

It carries out the reaction nicotinate beta-D-ribonucleotide + ATP + H(+) = deamido-NAD(+) + diphosphate. Its pathway is cofactor biosynthesis; NAD(+) biosynthesis; deamido-NAD(+) from nicotinate D-ribonucleotide: step 1/1. Catalyzes the reversible adenylation of nicotinate mononucleotide (NaMN) to nicotinic acid adenine dinucleotide (NaAD). The sequence is that of Probable nicotinate-nucleotide adenylyltransferase from Pelodictyon phaeoclathratiforme (strain DSM 5477 / BU-1).